The primary structure comprises 497 residues: Histone-lysine N-methyltransferase ASHR3 (497 aa).

The segment at 118 to 186 (MVDCLVCHKP…QWRCVKCPMA (69 aa)) adopts a PHD-type zinc-finger fold. The AWS domain occupies 283 to 326 (DGVGCTNCGPNCDRSCVCRVQCISCSKGCSCPESCGNRPFRKEK). The SET domain maps to 326 to 443 (KKIKIVKTEH…AGEPLTYDYR (118 aa)). A Post-SET domain is found at 449-465 (PEVKCNCGSENCQGYLG).

This sequence belongs to the class V-like SAM-binding methyltransferase superfamily. Histone-lysine methyltransferase family. SET2 subfamily. Interacts with AMS/bHLH21 by its SET domain and PHD finger. As to expression, expressed in roots, flowers and buds, the anther and in stamen filaments.

It localises to the nucleus. It is found in the chromosome. It carries out the reaction L-lysyl-[histone] + S-adenosyl-L-methionine = N(6)-methyl-L-lysyl-[histone] + S-adenosyl-L-homocysteine + H(+). In terms of biological role, histone methyltransferase. Involved in stamen development. The polypeptide is Histone-lysine N-methyltransferase ASHR3 (ASHR3) (Arabidopsis thaliana (Mouse-ear cress)).